A 399-amino-acid chain; its full sequence is MEKKKEEDHHHQQQQQQQKEIKNTETKIEQEQEQEQKQEISQASSSSNMANLVTSSDHHPLELAGNLSSIFDTSSLPFPYSYFEDHSSNNPNSFLDLLRQDHQFASSSNSSSFSFDAFPLPNNNNNTSFFTDLPLPQAESSEVVNTTPTSPNSTSVSSSSNEAANDNNSGKEVTVKDQEEGDQQQEQKGTKPQLKAKKKNQKKAREARFAFLTKSDIDNLDDGYRWRKYGQKAVKNSPYPRSYYRCTTVGCGVKKRVERSSDDPSIVMTTYEGQHTHPFPMTPRGHIGMLTSPILDHGATTASSSSFSIPQPRYLLTQHHQPYNMYNNNSLSMINRRSSDGTFVNPGPSSSFPGFGYDMSQASTSTSSSIRDHGLLQDILPSQIRSDTINTQTNEENKK.

Basic and acidic residues-rich tracts occupy residues 1–11 and 19–38; these read MEKKKEEDHHH and KEIKNTETKIEQEQEQEQKQ. Disordered regions lie at residues 1–57 and 138–202; these read MEKK…TSSD and AESS…KNQK. The span at 143–161 shows a compositional bias: low complexity; the sequence is VVNTTPTSPNSTSVSSSSN. Residues 162–171 are compositionally biased toward polar residues; the sequence is EAANDNNSGK. Residues 184–193 show a composition bias toward low complexity; sequence QQEQKGTKPQ. A DNA-binding region (WRKY) is located at residues 215 to 280; that stretch reads SDIDNLDDGY…YEGQHTHPFP (66 aa). The disordered stretch occupies residues 361-399; that stretch reads QASTSTSSSIRDHGLLQDILPSQIRSDTINTQTNEENKK. Residues 383-399 show a composition bias toward polar residues; the sequence is QIRSDTINTQTNEENKK.

It localises to the nucleus. Its function is as follows. Transcription factor. Interacts specifically with the W box (5'-(T)TGAC[CT]-3'), a frequently occurring elicitor-responsive cis-acting element. The polypeptide is Probable WRKY transcription factor 48 (WRKY48) (Arabidopsis thaliana (Mouse-ear cress)).